The following is a 100-amino-acid chain: Urease subunit gamma (100 aa).

This sequence belongs to the urease gamma subunit family. Heterotrimer of UreA (gamma), UreB (beta) and UreC (alpha) subunits. Three heterotrimers associate to form the active enzyme.

The protein localises to the cytoplasm. It catalyses the reaction urea + 2 H2O + H(+) = hydrogencarbonate + 2 NH4(+). Its pathway is nitrogen metabolism; urea degradation; CO(2) and NH(3) from urea (urease route): step 1/1. The sequence is that of Urease subunit gamma from Edwardsiella ictaluri (strain 93-146).